We begin with the raw amino-acid sequence, 371 residues long: Vasopressin V2 receptor (371 aa).

At 1-38 the chain is on the extracellular side; that stretch reads MLLVSTVSAVPGLFSPPSSPSNSSQEELLDDRDPLLVR. Asn22 is a glycosylation site (N-linked (GlcNAc...) asparagine). A helical membrane pass occupies residues 39–63; the sequence is AELALLSTIFVAVALSNGLVLGALI. The Cytoplasmic portion of the chain corresponds to 64–77; the sequence is RRGRRGRWAPMHVF. Residues 78–98 traverse the membrane as a helical segment; the sequence is ISHLCLADLAVALFQVLPQLA. Residues 99-113 lie on the Extracellular side of the membrane; sequence WDATDRFHGPDALCR. Residues 114–135 traverse the membrane as a helical segment; sequence AVKYLQMVGMYASSYMILAMTL. Topologically, residues 136–159 are cytoplasmic; it reads DRHRAICRPMLAYRHGGGARWNRP. The chain crosses the membrane as a helical span at residues 160 to 180; sequence VLVAWAFSLLLSLPQLFIFAQ. Residues 181-200 lie on the Extracellular side of the membrane; the sequence is RDVGNGSGVFDCWARFAEPW. Residue Asn185 is glycosylated (N-linked (GlcNAc...) asparagine). Residues 201-220 form a helical membrane-spanning segment; it reads GLRAYVTWIALMVFVAPALG. The Cytoplasmic segment spans residues 221-271; sequence IAACQVLIFREIHASLVPGPSERAGRRRRGRRTGSPSEGAHVSAAMAKTVR. The interval 240–260 is disordered; the sequence is PSERAGRRRRGRRTGSPSEGA. A helical transmembrane segment spans residues 272–293; it reads MTLVIVIVYVLCWAPFFLVQLW. Residues 294-308 are Extracellular-facing; sequence AAWDPEAPLERPPFV. Residues 309–328 traverse the membrane as a helical segment; it reads LLMLLASLNSCTNPWIYASF. The Cytoplasmic portion of the chain corresponds to 329–371; the sequence is SSSVSSELRSLLCCAQRHTTHSLGPQDESCATASSSLMKDTPS. S-palmitoyl cysteine attachment occurs at residues Cys341 and Cys342. Positions 349–371 are disordered; the sequence is HSLGPQDESCATASSSLMKDTPS. Polar residues predominate over residues 357 to 371; the sequence is SCATASSSLMKDTPS.

It belongs to the G-protein coupled receptor 1 family. Vasopressin/oxytocin receptor subfamily. As to quaternary structure, interacts with ARRDC4. Identified in a complex containing at least ARRDC4, V2R and HGS. Interacts with TMEM147. Kidney.

The protein resides in the cell membrane. In terms of biological role, receptor for arginine vasopressin. The activity of this receptor is mediated by G proteins which activate adenylate cyclase. Involved in renal water reabsorption. This is Vasopressin V2 receptor (Avpr2) from Rattus norvegicus (Rat).